The sequence spans 242 residues: Probable 2-phosphosulfolactate phosphatase (242 aa).

The protein belongs to the ComB family. It depends on Mg(2+) as a cofactor.

It carries out the reaction (2R)-O-phospho-3-sulfolactate + H2O = (2R)-3-sulfolactate + phosphate. The protein is Probable 2-phosphosulfolactate phosphatase of Synechococcus sp. (strain JA-3-3Ab) (Cyanobacteria bacterium Yellowstone A-Prime).